We begin with the raw amino-acid sequence, 204 residues long: UPF0056 membrane protein CT_852 (204 aa).

The next 6 membrane-spanning stretches (helical) occupy residues 9-29, 39-59, 66-86, 107-127, 138-158, and 176-196; these read TLLF…IALL, HIIL…VTFG, LGII…SIAI, IFFP…STLG, IVLG…LLSS, and FGIS…STAF.

The protein belongs to the UPF0056 (MarC) family.

It is found in the cell membrane. In Chlamydia trachomatis serovar D (strain ATCC VR-885 / DSM 19411 / UW-3/Cx), this protein is UPF0056 membrane protein CT_852.